Consider the following 392-residue polypeptide: Chorismate synthase (392 aa).

NADP(+)-binding residues include Arg40 and Arg46. FMN contacts are provided by residues 129–131 (RSS), 257–258 (QA), Gly302, 317–321 (KPIAT), and Arg343.

The protein belongs to the chorismate synthase family. As to quaternary structure, homotetramer. FMNH2 serves as cofactor.

The catalysed reaction is 5-O-(1-carboxyvinyl)-3-phosphoshikimate = chorismate + phosphate. It participates in metabolic intermediate biosynthesis; chorismate biosynthesis; chorismate from D-erythrose 4-phosphate and phosphoenolpyruvate: step 7/7. Catalyzes the anti-1,4-elimination of the C-3 phosphate and the C-6 proR hydrogen from 5-enolpyruvylshikimate-3-phosphate (EPSP) to yield chorismate, which is the branch point compound that serves as the starting substrate for the three terminal pathways of aromatic amino acid biosynthesis. This reaction introduces a second double bond into the aromatic ring system. The sequence is that of Chorismate synthase from Chloroherpeton thalassium (strain ATCC 35110 / GB-78).